The primary structure comprises 438 residues: Rhomboid-related protein 1 (438 aa).

A disordered region spans residues Met-1–Ser-62. Acidic residues predominate over residues Gly-8–Asp-17. 7 helical membrane-spanning segments follow: residues Pro-196–Ala-216, Gly-262–Leu-282, Ile-284–Met-304, Val-308–Met-328, Leu-340–Leu-359, Pro-372–Leu-392, and Trp-405–Phe-425. Ser-312 serves as the catalytic Nucleophile. His-377 is a catalytic residue.

Belongs to the peptidase S54 family. In terms of tissue distribution, detected in heart, brain, skeletal muscle and kidney.

It is found in the membrane. It catalyses the reaction Cleaves type-1 transmembrane domains using a catalytic dyad composed of serine and histidine that are contributed by different transmembrane domains.. May be involved in regulated intramembrane proteolysis and the subsequent release of functional polypeptides from their membrane anchors. This Homo sapiens (Human) protein is Rhomboid-related protein 1 (RHBDL1).